Consider the following 517-residue polypeptide: Cytochrome P450 monooxygenase ausI (517 aa).

Residues 8 to 28 (LAPLGQPWIAGLVVVSAVLYL) form a helical membrane-spanning segment. Residue Cys457 coordinates heme.

The protein belongs to the cytochrome P450 family. Heme serves as cofactor.

It is found in the membrane. Its pathway is secondary metabolite biosynthesis; terpenoid biosynthesis. Functionally, cytochrome P450 monooxygenase; part of the gene cluster that mediates the biosynthesis of calidodehydroaustin, a fungal meroterpenoid. The first step of the pathway is the synthesis of 3,5-dimethylorsellinic acid by the polyketide synthase ausA. 3,5-dimethylorsellinic acid is then prenylated by the polyprenyl transferase ausN. Further epoxidation by the FAD-dependent monooxygenase ausM and cyclization by the probable terpene cyclase ausL lead to the formation of protoaustinoid A. Protoaustinoid A is then oxidized to spiro-lactone preaustinoid A3 by the combined action of the FAD-binding monooxygenases ausB and ausC, and the dioxygenase ausE. Acid-catalyzed keto-rearrangement and ring contraction of the tetraketide portion of preaustinoid A3 by ausJ lead to the formation of preaustinoid A4. The aldo-keto reductase ausK, with the help of ausH, is involved in the next step by transforming preaustinoid A4 into isoaustinone which is in turn hydroxylated by the P450 monooxygenase ausI to form austinolide. The cytochrome P450 monooxygenase ausG modifies austinolide to austinol. Austinol is further acetylated to austin by the O-acetyltransferase ausP, which spontaneously changes to dehydroaustin. The cytochrome P450 monooxygenase ausR then converts dehydroaustin is into 7-dehydrodehydroaustin. The hydroxylation catalyzed by ausR permits the O-acetyltransferase ausQ to add an additional acetyl group to the molecule, leading to the formation of acetoxydehydroaustin. The short chain dehydrogenase ausT catalyzes the reduction of the double bond present between carbon atoms 1 and 2 to convert 7-dehydrodehydroaustin into 1,2-dihydro-7-hydroxydehydroaustin. AusQ catalyzes not only an acetylation reaction but also the addition of the PKS ausV diketide product to 1,2-dihydro-7-hydroxydehydroaustin, forming precalidodehydroaustin. Finally, the iron/alpha-ketoglutarate-dependent dioxygenase converts precalidodehydroaustin into calidodehydroaustin. In Aspergillus calidoustus, this protein is Cytochrome P450 monooxygenase ausI.